The primary structure comprises 751 residues: WD repeat-containing protein 91 (751 aa).

The stretch at 188–212 (IQEENESLRHKLFALQAESSRMKKE) forms a coiled coil. Positions 264–395 (LSQSKKGPAR…ASSTESVGVR (132 aa)) are disordered. Positions 278–287 (SGASPTQTGS) are enriched in polar residues. Basic and acidic residues predominate over residues 334 to 346 (RLQEHGKERRELL). The segment covering 377 to 391 (QAETSTKMPASSTES) has biased composition (polar residues). 7 WD repeats span residues 410–449 (EHHS…QTKA), 452–492 (ISKS…NLCE), 497–559 (EDMP…QQLQ), 564–603 (PEPI…CAMS), 606–645 (AHDG…LKIS), 668–706 (VQFP…KVLE), and 713–751 (GHRA…AQKS).

It belongs to the WD repeat WDR91 family.

The protein localises to the early endosome membrane. It is found in the late endosome membrane. Functions as a negative regulator of the PI3 kinase/PI3K activity associated with endosomal membranes. By modifying the phosphatidylinositol 3-phosphate/PtdInsP3 content of endosomal membranes may regulate endosome fusion, recycling, sorting and early to late endosome transport. The sequence is that of WD repeat-containing protein 91 from Gallus gallus (Chicken).